The sequence spans 743 residues: Dystrobrevin alpha (743 aa).

The segment at 1-288 (MIEDSGKRGN…SHSNQHQMKE (288 aa)) is interaction with MAGEE1. The segment at 238 to 294 (FHPVECSYCHSESMMGFRYRCQQCHNYQLCQDCFWRGHAGGSHSNQHQMKEYTSWKS) adopts a ZZ-type zinc-finger fold. The Zn(2+) site is built by Cys243, Cys246, Cys258, Cys261, Cys267, Cys270, His280, and His284. The syntrophin-binding region stretch occupies residues 400–450 (DRLADEHVLIGLYVNMLRNNPSCMLESSNRLDEEHRLIARYAARLAAESSS). A coiled-coil region spans residues 461–556 (DISFTIDANK…EGLMKLLKTQ (96 aa)). The segment at 556-575 (QGAGSPRSSPSHTISRPIPM) is disordered. Positions 557–569 (GAGSPRSSPSHTI) are enriched in polar residues. At Ser662 the chain carries Phosphoserine.

The protein belongs to the dystrophin family. Dystrobrevin subfamily. Interacts with dystrophin, utrophin and the syntrophins SNTA1, SNTB1, SNTB2, SNTG1 and SNTG2. Interacts with MAGEE1. Binds dystrobrevin binding protein 1. Interacts with CTNNAL1. The interaction is required for correct localization of both CTNNAL1 and DTNA. In terms of assembly, does not interact with dystrophin. In terms of processing, phosphorylation of DTN-1 on tyrosine kinase substrate domain present in the C-terminus. As to expression, highly expressed in brain, skeletal and cardiac muscles, and expressed at lower levels in lung, liver and pancreas. Isoform 2 is not expressed in cardiac muscle. Isoform 7 and isoform 8 are only expressed in muscle.

The protein localises to the cytoplasm. It localises to the synapse. The protein resides in the cell membrane. Its function is as follows. May be involved in the formation and stability of synapses as well as being involved in the clustering of nicotinic acetylcholine receptors. The sequence is that of Dystrobrevin alpha from Homo sapiens (Human).